The following is a 288-amino-acid chain: Phosphatidylserine decarboxylase proenzyme (288 aa).

Active-site charge relay system; for autoendoproteolytic cleavage activity residues include Asp88, His145, and Ser248. Catalysis depends on Ser248, which acts as the Schiff-base intermediate with substrate; via pyruvic acid; for decarboxylase activity. Residue Ser248 is modified to Pyruvic acid (Ser); by autocatalysis.

This sequence belongs to the phosphatidylserine decarboxylase family. PSD-B subfamily. Prokaryotic type I sub-subfamily. In terms of assembly, heterodimer of a large membrane-associated beta subunit and a small pyruvoyl-containing alpha subunit. Pyruvate serves as cofactor. In terms of processing, is synthesized initially as an inactive proenzyme. Formation of the active enzyme involves a self-maturation process in which the active site pyruvoyl group is generated from an internal serine residue via an autocatalytic post-translational modification. Two non-identical subunits are generated from the proenzyme in this reaction, and the pyruvate is formed at the N-terminus of the alpha chain, which is derived from the carboxyl end of the proenzyme. The autoendoproteolytic cleavage occurs by a canonical serine protease mechanism, in which the side chain hydroxyl group of the serine supplies its oxygen atom to form the C-terminus of the beta chain, while the remainder of the serine residue undergoes an oxidative deamination to produce ammonia and the pyruvoyl prosthetic group on the alpha chain. During this reaction, the Ser that is part of the protease active site of the proenzyme becomes the pyruvoyl prosthetic group, which constitutes an essential element of the active site of the mature decarboxylase.

The protein resides in the cell membrane. It carries out the reaction a 1,2-diacyl-sn-glycero-3-phospho-L-serine + H(+) = a 1,2-diacyl-sn-glycero-3-phosphoethanolamine + CO2. It functions in the pathway phospholipid metabolism; phosphatidylethanolamine biosynthesis; phosphatidylethanolamine from CDP-diacylglycerol: step 2/2. Catalyzes the formation of phosphatidylethanolamine (PtdEtn) from phosphatidylserine (PtdSer). This is Phosphatidylserine decarboxylase proenzyme from Azoarcus sp. (strain BH72).